Here is a 58-residue protein sequence, read N- to C-terminus: Large ribosomal subunit protein bL32 (58 aa).

Over residues Met1–Gln15 the composition is skewed to basic residues. A disordered region spans residues Met1–Lys23.

It belongs to the bacterial ribosomal protein bL32 family.

In Synechococcus sp. (strain CC9902), this protein is Large ribosomal subunit protein bL32.